Here is a 224-residue protein sequence, read N- to C-terminus: Thiamine-phosphate synthase (224 aa).

4-amino-2-methyl-5-(diphosphooxymethyl)pyrimidine is bound by residues 41 to 45 (QFRDK) and Asp77. Residues Asp78 and Asp97 each contribute to the Mg(2+) site. Ser116 contributes to the 4-amino-2-methyl-5-(diphosphooxymethyl)pyrimidine binding site. 2-[(2R,5Z)-2-carboxy-4-methylthiazol-5(2H)-ylidene]ethyl phosphate is bound at residue 143–145 (TNS). Lys146 is a binding site for 4-amino-2-methyl-5-(diphosphooxymethyl)pyrimidine. Residues Gly174 and 194–195 (IS) each bind 2-[(2R,5Z)-2-carboxy-4-methylthiazol-5(2H)-ylidene]ethyl phosphate.

This sequence belongs to the thiamine-phosphate synthase family. Mg(2+) is required as a cofactor.

It catalyses the reaction 2-[(2R,5Z)-2-carboxy-4-methylthiazol-5(2H)-ylidene]ethyl phosphate + 4-amino-2-methyl-5-(diphosphooxymethyl)pyrimidine + 2 H(+) = thiamine phosphate + CO2 + diphosphate. It carries out the reaction 2-(2-carboxy-4-methylthiazol-5-yl)ethyl phosphate + 4-amino-2-methyl-5-(diphosphooxymethyl)pyrimidine + 2 H(+) = thiamine phosphate + CO2 + diphosphate. The catalysed reaction is 4-methyl-5-(2-phosphooxyethyl)-thiazole + 4-amino-2-methyl-5-(diphosphooxymethyl)pyrimidine + H(+) = thiamine phosphate + diphosphate. The protein operates within cofactor biosynthesis; thiamine diphosphate biosynthesis; thiamine phosphate from 4-amino-2-methyl-5-diphosphomethylpyrimidine and 4-methyl-5-(2-phosphoethyl)-thiazole: step 1/1. Functionally, condenses 4-methyl-5-(beta-hydroxyethyl)thiazole monophosphate (THZ-P) and 2-methyl-4-amino-5-hydroxymethyl pyrimidine pyrophosphate (HMP-PP) to form thiamine monophosphate (TMP). The protein is Thiamine-phosphate synthase of Latilactobacillus sakei subsp. sakei (strain 23K) (Lactobacillus sakei subsp. sakei).